A 253-amino-acid polypeptide reads, in one-letter code: Protein C1orf43 homolog (253 aa).

The chain crosses the membrane as a helical span at residues 11 to 31 (VNVVLVMAYGSLVFVLLFIFV). The disordered stretch occupies residues 194–213 (SGSSQRQHQSAAKDLTQSPE).

It is found in the membrane. The protein resides in the golgi apparatus. The protein localises to the mitochondrion. General regulator of phagocytosis. Required to uptake Gram negative bacterium by macrophages. This Bos taurus (Bovine) protein is Protein C1orf43 homolog.